The chain runs to 354 residues: MTAKPLRTVLSLLFFALSGVLGTPEISCRNEYGEAVDWFIFYKLPKRTSKASEEAGLQYLYLDSTRQTWNKSLYLINSTRSALGRTLQHLYDTHNSTNDTAYLIYNDGVPGSVNYSRQYGHAKGLLVWNRTQGFWLIHSVPKFPPVHGYEYPTSGRRYGQTGICITFGYSQFEEIDFQLLVLQPNIYSCFIPSTFHWKLIYMPRMCANSSSLKIPVRYLAELHSAQGLNFVHFAKSSFYTDDIFTGWIAQKLKTHLLAQTWQKKKQELPSNCSLPYHVYNIKSIGVTSKSYFSSRQDHSKWCVSIKGSANRWTCIGDLNRSLHQALRGGGFICTKNHYIYQAFHKLYLRYGFCK.

Positions 1-22 (MTAKPLRTVLSLLFFALSGVLG) are cleaved as a signal peptide. N-linked (GlcNAc...) asparagine glycans are attached at residues Asn70, Asn77, Asn95, Asn98, Asn114, Asn129, Asn208, Asn271, and Asn319.

The protein belongs to the DNase II family. In terms of tissue distribution, highly expressed in the eye lens. Detected in liver, but not in the other tissues tested.

It is found in the lysosome. It carries out the reaction Endonucleolytic cleavage to nucleoside 3'-phosphates and 3'-phosphooligonucleotide end-products.. In terms of biological role, hydrolyzes DNA under acidic conditions. Does not require divalent cations for activity. Participates in the degradation of nuclear DNA during lens cell differentiation. In Mus musculus (Mouse), this protein is Deoxyribonuclease-2-beta (Dnase2b).